We begin with the raw amino-acid sequence, 95 residues long: Co-chaperonin GroES (95 aa).

It belongs to the GroES chaperonin family. Heptamer of 7 subunits arranged in a ring. Interacts with the chaperonin GroEL.

The protein resides in the cytoplasm. In terms of biological role, together with the chaperonin GroEL, plays an essential role in assisting protein folding. The GroEL-GroES system forms a nano-cage that allows encapsulation of the non-native substrate proteins and provides a physical environment optimized to promote and accelerate protein folding. GroES binds to the apical surface of the GroEL ring, thereby capping the opening of the GroEL channel. This is Co-chaperonin GroES from Ruegeria pomeroyi (strain ATCC 700808 / DSM 15171 / DSS-3) (Silicibacter pomeroyi).